The primary structure comprises 199 residues: Ribonuclease HII (199 aa).

Residues 11–199 (SRVAGVDEVG…RRSFLRRLLG (189 aa)) enclose the RNase H type-2 domain. 3 residues coordinate a divalent metal cation: aspartate 17, glutamate 18, and aspartate 113.

Belongs to the RNase HII family. Requires Mn(2+) as cofactor. Mg(2+) serves as cofactor.

It is found in the cytoplasm. The enzyme catalyses Endonucleolytic cleavage to 5'-phosphomonoester.. Its function is as follows. Endonuclease that specifically degrades the RNA of RNA-DNA hybrids. This Synechococcus sp. (strain CC9902) protein is Ribonuclease HII.